A 1502-amino-acid polypeptide reads, in one-letter code: DNA-directed RNA polymerase subunit beta' (1502 aa).

Zn(2+) contacts are provided by cysteine 60, cysteine 62, cysteine 75, and cysteine 78. Residues 265 to 293 (RKQRDLEDAEQLTGAERERKEYEASQERE) are disordered. Residues 279-293 (AERERKEYEASQERE) are compositionally biased toward basic and acidic residues. Residues aspartate 626, aspartate 628, and aspartate 630 each coordinate Mg(2+). Zn(2+) contacts are provided by cysteine 1002, cysteine 1075, cysteine 1082, and cysteine 1085. The tract at residues 1472–1502 (SDDNGDEVGKNGEFADETPFTGDSDDRDNEI) is disordered.

This sequence belongs to the RNA polymerase beta' chain family. The RNAP catalytic core consists of 2 alpha, 1 beta, 1 beta' and 1 omega subunit. When a sigma factor is associated with the core the holoenzyme is formed, which can initiate transcription. Requires Mg(2+) as cofactor. Zn(2+) serves as cofactor.

It catalyses the reaction RNA(n) + a ribonucleoside 5'-triphosphate = RNA(n+1) + diphosphate. In terms of biological role, DNA-dependent RNA polymerase catalyzes the transcription of DNA into RNA using the four ribonucleoside triphosphates as substrates. In Roseiflexus castenholzii (strain DSM 13941 / HLO8), this protein is DNA-directed RNA polymerase subunit beta'.